We begin with the raw amino-acid sequence, 243 residues long: Protein IN2-1 (243 aa).

The interval 1–26 is disordered; the sequence is MAAAAGPSSSVKESLPPALGSTSQPP. In terms of domain architecture, GST N-terminal spans 31–112; that stretch reads GTTRLYICYF…YIDSNFDGPA (82 aa). Glutathione-binding positions include Lys70, Val84, and 96-97; that span reads ES. The 132-residue stretch at 109–240 folds into the GST C-terminal domain; sequence DGPALLPEDA…FLLDLAKSHL (132 aa).

Belongs to the GST superfamily. HSP26 family. Leaves and roots. It is more strongly induced in the leaves relative to the roots.

The sequence is that of Protein IN2-1 (IN2-1) from Zea mays (Maize).